The primary structure comprises 458 residues: Zinc finger protein 19 (458 aa).

One can recognise a KRAB domain in the interval 14–85 (VTFEDVAVHF…EAQDDPPAER (72 aa)). 9 C2H2-type zinc fingers span residues 161-183 (FICE…QRIH), 189-211 (FECS…QRIH), 217-239 (YQCE…QRIH), 245-267 (YYCT…QRIH), 273-295 (YECN…QKIH), 301-323 (YECN…QRIH), 329-351 (YSCK…QRIH), 357-379 (FDCV…LRIH), and 385-407 (YVCD…QRIH). The C2H2-type 10; atypical zinc finger occupies 413–433 (YECSKYEKAFGTSSQLGHLEH).

It belongs to the krueppel C2H2-type zinc-finger protein family.

The protein resides in the nucleus. May be involved in transcriptional regulation. The chain is Zinc finger protein 19 (ZNF19) from Homo sapiens (Human).